Consider the following 116-residue polypeptide: Ribosome-binding factor A (116 aa).

It belongs to the RbfA family. In terms of assembly, monomer. Binds 30S ribosomal subunits, but not 50S ribosomal subunits or 70S ribosomes.

Its subcellular location is the cytoplasm. In terms of biological role, one of several proteins that assist in the late maturation steps of the functional core of the 30S ribosomal subunit. Associates with free 30S ribosomal subunits (but not with 30S subunits that are part of 70S ribosomes or polysomes). Required for efficient processing of 16S rRNA. May interact with the 5'-terminal helix region of 16S rRNA. This chain is Ribosome-binding factor A, found in Mycoplasma pneumoniae (strain ATCC 29342 / M129 / Subtype 1) (Mycoplasmoides pneumoniae).